Consider the following 261-residue polypeptide: MRVALGIEYDGSQYFGWQRQAEVDTVQERLEKALSIVANEPIAVHCAGRTDAGVHATGQVVHFETNAIRKETAWTLGVNVNLPDNIAVRWVKVVDDEFHARFTATARRYRYMIYNHQLRPGILRSGVSHYPGDIDESKMHQAAQYLLGEQDFTSFRAVHCQSNTPFRCVHEVNVTRQGMYICVDIKANAFLHHMVRNIVGSLLEVGLGNQSVEWIEQLLALKDRNKAAATAKPNGLYLVDVTYPESYQLPKLSLGPLFMLD.

Catalysis depends on aspartate 51, which acts as the Nucleophile. Residue tyrosine 109 coordinates substrate.

It belongs to the tRNA pseudouridine synthase TruA family. As to quaternary structure, homodimer.

It carries out the reaction uridine(38/39/40) in tRNA = pseudouridine(38/39/40) in tRNA. Its function is as follows. Formation of pseudouridine at positions 38, 39 and 40 in the anticodon stem and loop of transfer RNAs. This chain is tRNA pseudouridine synthase A, found in Shewanella pealeana (strain ATCC 700345 / ANG-SQ1).